Reading from the N-terminus, the 73-residue chain is Dipeptidyl peptidase 3 (73 aa).

It belongs to the peptidase M49 family. Zn(2+) serves as cofactor.

It is found in the membrane. It catalyses the reaction Release of an N-terminal dipeptide from a peptide comprising four or more residues, with broad specificity. Also acts on dipeptidyl 2-naphthylamides.. Its function is as follows. Degrades neuropeptide proctolin (RYLPT) by cleavage between Tyr and Leu residues. The protein is Dipeptidyl peptidase 3 of Blaberus craniifer (Death's head cockroach).